The sequence spans 254 residues: Metalloprotease YcaL (254 aa).

The first 19 residues, 1–19 (MKNTKLLLAIATSAALLTG), serve as a signal peptide directing secretion. Cys-20 carries the N-palmitoyl cysteine lipid modification. Cys-20 carries S-diacylglycerol cysteine lipidation. Position 134 (His-134) interacts with Zn(2+). Glu-135 is a catalytic residue. 2 residues coordinate Zn(2+): His-138 and Glu-193. A disordered region spans residues 227 to 254 (GRTQSMFDSHPPSTERAQHIRDRIASGK). The segment covering 242–254 (RAQHIRDRIASGK) has biased composition (basic and acidic residues).

It belongs to the peptidase M48B family. It depends on Zn(2+) as a cofactor.

It is found in the cell inner membrane. Involved in the degradation of the LPS-assembly protein LptD. Degrades LptD that have engaged the Bam complex but are stalled at an early step in the outer membrane protein assembly process. This Escherichia coli (strain K12) protein is Metalloprotease YcaL (ycaL).